Here is a 508-residue protein sequence, read N- to C-terminus: Maturase K (508 aa).

This sequence belongs to the intron maturase 2 family. MatK subfamily.

It is found in the plastid. The protein resides in the chloroplast. In terms of biological role, usually encoded in the trnK tRNA gene intron. Probably assists in splicing its own and other chloroplast group II introns. The chain is Maturase K from Antirrhinum majus (Garden snapdragon).